A 270-amino-acid polypeptide reads, in one-letter code: Transcription factor PU.1 (270 aa).

The segment at 123–164 (SLSPAQPSSDEEEGERQSPPLEVSDGEADGLEPGPGLLPGET) is disordered. A phosphoserine mark is found at Ser140 and Ser146. A compositionally biased stretch (low complexity) spans 153 to 164 (LEPGPGLLPGET). The ETS DNA-binding region spans 170 to 253 (IRLYQFLLDL…VKKKLTYQFS (84 aa)). DNA-binding residues include Lys217, Arg230, Arg233, and Lys243.

This sequence belongs to the ETS family. Binds DNA as a monomer. Can form homomers. Directly interacts with CEBPD/NF-IL6-beta; this interaction does not affect DNA-binding properties of each partner. Interacts with NONO/p54(nrb). Interacts with RUNX1/AML1. Interacts with GFI1; the interaction represses SPI1 transcriptional activity, hence blocks SPI1-induced macrophage differentiation of myeloid progenitor cells. Interacts with CEBPE. Interacts with IRF4/Pip and IRF8. Interacts with JUN. Interacts with RB1. Interacts with TBP. In the bone marrow, concentrated in hematopoietic stem cell, lymphoid progenitor, myeloid lineage (granulocyte macrophage progenitors, classical dendritic cells, monocytes) and B-cell clusters. Among B-cells, predominantly expressed in pre-B1 cells. Expressed in germinal center B-cells.

It is found in the nucleus. Its activity is regulated as follows. Transcriptional activity at macrophage-specific genes is inhibited by interaction with GFI1, which results in the inhibition of SPI1-induced macrophage differentiation of myeloid progenitor cells, but not that of the granulocyte lineage. Its function is as follows. Pioneer transcription factor, which controls hematopoietic cell fate by decompacting stem cell heterochromatin and allowing other transcription factors to enter otherwise inaccessible genomic sites. Once in open chromatin, can directly control gene expression by binding genetic regulatory elements and can also more broadly influence transcription by recruiting transcription factors, such as interferon regulatory factors (IRFs), to otherwise inaccessible genomic regions. Transcriptionally activates genes important for myeloid and lymphoid lineages, such as CSF1R. Transcriptional activation from certain promoters, possibly containing low affinity binding sites, is achieved cooperatively with other transcription factors. FCER1A transactivation is achieved in cooperation with GATA1. May be particularly important for the pro- to pre-B cell transition. Binds (via the ETS domain) onto the purine-rich DNA core sequence 5'-GAGGAA-3', also known as the PU-box. In vitro can bind RNA and interfere with pre-mRNA splicing. The chain is Transcription factor PU.1 (SPI1) from Homo sapiens (Human).